The chain runs to 185 residues: Ribosome-recycling factor (185 aa).

Belongs to the RRF family.

It is found in the cytoplasm. Functionally, responsible for the release of ribosomes from messenger RNA at the termination of protein biosynthesis. May increase the efficiency of translation by recycling ribosomes from one round of translation to another. This is Ribosome-recycling factor from Finegoldia magna (strain ATCC 29328 / DSM 20472 / WAL 2508) (Peptostreptococcus magnus).